The sequence spans 164 residues: ATP synthase subunit b (164 aa).

Residues 10 to 32 (AVAFVLFFVLFGKKLWTPLAAAL) form a helical membrane-spanning segment.

It belongs to the ATPase B chain family. As to quaternary structure, F-type ATPases have 2 components, F(1) - the catalytic core - and F(0) - the membrane proton channel. F(1) has five subunits: alpha(3), beta(3), gamma(1), delta(1), epsilon(1). F(0) has three main subunits: a(1), b(2) and c(10-14). The alpha and beta chains form an alternating ring which encloses part of the gamma chain. F(1) is attached to F(0) by a central stalk formed by the gamma and epsilon chains, while a peripheral stalk is formed by the delta and b chains.

The protein localises to the cell inner membrane. Its function is as follows. F(1)F(0) ATP synthase produces ATP from ADP in the presence of a proton or sodium gradient. F-type ATPases consist of two structural domains, F(1) containing the extramembraneous catalytic core and F(0) containing the membrane proton channel, linked together by a central stalk and a peripheral stalk. During catalysis, ATP synthesis in the catalytic domain of F(1) is coupled via a rotary mechanism of the central stalk subunits to proton translocation. Component of the F(0) channel, it forms part of the peripheral stalk, linking F(1) to F(0). This is ATP synthase subunit b from Gluconacetobacter diazotrophicus (strain ATCC 49037 / DSM 5601 / CCUG 37298 / CIP 103539 / LMG 7603 / PAl5).